The primary structure comprises 520 residues: Tubby-related protein 2 (520 aa).

Residues serine 135 and serine 190 each carry the phosphoserine modification. The interval 141–236 (EVSVENGSVS…GTNSSAAHNE (96 aa)) is disordered. Over residues 211-223 (QKEEDLEKKREAS) the composition is skewed to basic and acidic residues. A compositionally biased stretch (polar residues) spans 224–233 (ESTGTNSSAA).

This sequence belongs to the TUB family. Strongly expressed in testis. Also expressed in retina. Expressed in cancer cell lines.

Its subcellular location is the cytoplasm. It is found in the secreted. The protein is Tubby-related protein 2 (TULP2) of Homo sapiens (Human).